A 123-amino-acid chain; its full sequence is uncharacterized protein (123 aa).

This is an uncharacterized protein from Homo sapiens (Human).